A 577-amino-acid polypeptide reads, in one-letter code: Myb-like protein N (577 aa).

3 disordered regions span residues 1 to 23 (MMTI…NIYT), 206 to 225 (TPFS…SPLN), and 240 to 264 (SSSS…LSSS). A compositionally biased stretch (low complexity) spans 213–225 (PNSPNSTSSSPLN). 2 consecutive HTH myb-type domains span residues 403-465 (KKST…CPAI) and 466-517 (RKGS…SREV). 2 DNA-binding regions (H-T-H motif) span residues 437 to 461 (WKKI…KRVL) and 489 to 513 (WKNV…KSCM). Positions 518–570 (PWTPKEDEILQKKVIENKQDSTKEIGWMDLSKAMARARQTKIPRTALECKIRF) constitute a Myb-like domain.

The protein resides in the nucleus. The protein is Myb-like protein N (mybN) of Dictyostelium discoideum (Social amoeba).